A 200-amino-acid polypeptide reads, in one-letter code: Serine/threonine-protein kinase mos (200 aa).

Residues 2–200 (LCLLQPLGSG…ELLKGERVTA (199 aa)) enclose the Protein kinase domain. ATP contacts are provided by residues 8-16 (LGSGGFGSV) and lysine 29. Residue aspartate 143 is the Proton acceptor of the active site.

Belongs to the protein kinase superfamily. Ser/Thr protein kinase family.

It carries out the reaction L-seryl-[protein] + ATP = O-phospho-L-seryl-[protein] + ADP + H(+). It catalyses the reaction L-threonyl-[protein] + ATP = O-phospho-L-threonyl-[protein] + ADP + H(+). The sequence is that of Serine/threonine-protein kinase mos (MOS) from Apteryx australis (Southern brown kiwi).